A 1197-amino-acid chain; its full sequence is PAN2-PAN3 deadenylation complex catalytic subunit PAN2 (1197 aa).

4 WD repeats span residues 153 to 193, 195 to 231, 244 to 280, and 328 to 367; these read DEAE…QKYT, EVPGITIMRQSNRFFFCGHTSGKVSLRDLRTFVVEHE, VHGNLLVTCGFSSRMNGLACDRFLKVYDLRMMRATTP, and TVGPLIMTFDVSASKQALAFGDSEGCVHLWADSPEVTFNT. Residues 368–485 are linker; sequence YSRETDFALP…IGREEEPHLY (118 aa). The 434-residue stretch at 486–919 folds into the USP domain; it reads MVAKKYRKVT…VPAILYYARR (434 aa). The 173-residue stretch at 970–1142 folds into the Exonuclease domain; it reads VGLDAEFVTL…EDARTALQLY (173 aa). Aspartate 973, glutamate 975, aspartate 1082, and aspartate 1134 together coordinate a divalent metal cation. A disordered region spans residues 1176-1197; the sequence is VPEPDSQSSPKHGAVFPPVLAL.

This sequence belongs to the peptidase C19 family. PAN2 subfamily. Forms a heterotrimer with an asymmetric homodimer of the regulatory subunit PAN3 to form the poly(A)-nuclease (PAN) deadenylation complex. A divalent metal cation serves as cofactor.

It localises to the cytoplasm. Its subcellular location is the P-body. The protein localises to the nucleus. The enzyme catalyses Exonucleolytic cleavage of poly(A) to 5'-AMP.. Positively regulated by the regulatory subunit PAN3. Its function is as follows. Catalytic subunit of the poly(A)-nuclease (PAN) deadenylation complex, one of two cytoplasmic mRNA deadenylases involved in general and miRNA-mediated mRNA turnover. PAN specifically shortens poly(A) tails of RNA and the activity is stimulated by poly(A)-binding protein (PABP). PAN deadenylation is followed by rapid degradation of the shortened mRNA tails by the CCR4-NOT complex. Deadenylated mRNAs are then degraded by two alternative mechanisms, namely exosome-mediated 3'-5' exonucleolytic degradation, or deadenylation-dependent mRNA decaping and subsequent 5'-3' exonucleolytic degradation by XRN1. This is PAN2-PAN3 deadenylation complex catalytic subunit PAN2 from Gallus gallus (Chicken).